Consider the following 505-residue polypeptide: AMP phosphorylase (505 aa).

AMP is bound by residues Gly170, 196–201 (SRAITS), and Thr205. The active-site Proton donor is Asp258. The AMP site is built by Ser266 and Lys290.

The protein belongs to the thymidine/pyrimidine-nucleoside phosphorylase family. Type 2 subfamily.

The catalysed reaction is AMP + phosphate = alpha-D-ribose 1,5-bisphosphate + adenine. The enzyme catalyses CMP + phosphate = cytosine + alpha-D-ribose 1,5-bisphosphate. It carries out the reaction UMP + phosphate = alpha-D-ribose 1,5-bisphosphate + uracil. In terms of biological role, catalyzes the conversion of AMP and phosphate to adenine and ribose 1,5-bisphosphate (R15P). Exhibits phosphorylase activity toward CMP and UMP in addition to AMP. Functions in an archaeal AMP degradation pathway, together with R15P isomerase and RubisCO. This Methanococcus maripaludis (strain C7 / ATCC BAA-1331) protein is AMP phosphorylase.